Reading from the N-terminus, the 147-residue chain is D-aminoacyl-tRNA deacylase (147 aa).

The Gly-cisPro motif, important for rejection of L-amino acids signature appears at 137–138 (GP).

It belongs to the DTD family. As to quaternary structure, homodimer.

Its subcellular location is the cytoplasm. The catalysed reaction is glycyl-tRNA(Ala) + H2O = tRNA(Ala) + glycine + H(+). It catalyses the reaction a D-aminoacyl-tRNA + H2O = a tRNA + a D-alpha-amino acid + H(+). Its function is as follows. An aminoacyl-tRNA editing enzyme that deacylates mischarged D-aminoacyl-tRNAs. Also deacylates mischarged glycyl-tRNA(Ala), protecting cells against glycine mischarging by AlaRS. Acts via tRNA-based rather than protein-based catalysis; rejects L-amino acids rather than detecting D-amino acids in the active site. By recycling D-aminoacyl-tRNA to D-amino acids and free tRNA molecules, this enzyme counteracts the toxicity associated with the formation of D-aminoacyl-tRNA entities in vivo and helps enforce protein L-homochirality. In Bacillus licheniformis (strain ATCC 14580 / DSM 13 / JCM 2505 / CCUG 7422 / NBRC 12200 / NCIMB 9375 / NCTC 10341 / NRRL NRS-1264 / Gibson 46), this protein is D-aminoacyl-tRNA deacylase.